A 287-amino-acid polypeptide reads, in one-letter code: MAIVFPFQLEKKLISITSDRDQISMSIPEVSSHDSCLNDCHSVNSEEQAKPVCCLELNAHKDGIKVVDTSNDASTFSNSPLVPDNFGVVYPGIIYRSACPRASNFNFLESLHIRTIISLRQEEYSEEDLHYFTKHHINYYHIAMPGSKHRKNDCISSSSNPDISDVDDLVRKTLQLLLNKENWPVLLHCSRGKHRTGIVIGCLRALMNWPVGNRLQEYISFSHPKEREVDEEYIQNFSSDPSLKSSLNDLKRYISDSSSELADVVLSSESPTVQAATVNETCRSPGS.

The Tyrosine-protein phosphatase domain occupies 85 to 256; sequence NFGVVYPGII…LNDLKRYISD (172 aa). 2 positions are modified to phosphoserine: Ser-156 and Ser-159. Cys-189 (phosphocysteine intermediate) is an active-site residue.

The protein belongs to the protein-tyrosine phosphatase family. Atypical dual-specificity phosphatase Siw14-like subfamily.

It localises to the cytoplasm. The protein resides in the nucleus. It carries out the reaction 5-diphospho-1D-myo-inositol 1,2,3,4,6-pentakisphosphate + H2O = 1D-myo-inositol hexakisphosphate + phosphate + H(+). The catalysed reaction is 1-diphospho-1D-myo-inositol 2,3,4,5,6-pentakisphosphate + H2O = 1D-myo-inositol hexakisphosphate + phosphate + H(+). The enzyme catalyses 1,5-bis(diphospho)-1D-myo-inositol 2,3,4,6-tetrakisphosphate + H2O = 1-diphospho-1D-myo-inositol 2,3,4,5,6-pentakisphosphate + phosphate + 2 H(+). Its activity is regulated as follows. Activity is inhibited by the reaction product inorganic phosphate and by sulfate (a phosphate mimetic). Not inhibited by magnesium. Its function is as follows. Cleaves the beta-phosphate at the 1- and 5-position of soluble inositol pyrophosphates. Has exopolyphosphatase activity in vitro but does not appear to contribute to the homeostasis of cellular polyphosphate. The polypeptide is Inositol diphosphatase siw14 (Schizosaccharomyces pombe (strain 972 / ATCC 24843) (Fission yeast)).